A 153-amino-acid chain; its full sequence is Prostaglandin E synthase (153 aa).

Topologically, residues 1 to 13 (MPPSGLELMNGQV) are lumenal. The helical transmembrane segment at 14 to 42 (LPAFLLCSALLVIKMYVVAVITGQVRLRK) threads the bilayer. Glutathione is bound at residue Arg39. Over 43-61 (KAFANPEDAQRHGGLQYCR) the chain is Cytoplasmic. A helical transmembrane segment spans residues 62–91 (NDPDVERCLRAHRNDMETIYPFLFLGFVYS). Residue 74 to 78 (RNDME) participates in glutathione binding. Residues 92–96 (FLGPN) are Lumenal-facing. Residues 97 to 120 (PFVARMHFLVFFLGRMVHTVAYLG) form a helical membrane-spanning segment. Glutathione contacts are provided by His114 and Tyr118. Residues 121-124 (KLRA) lie on the Cytoplasmic side of the membrane. A helical transmembrane segment spans residues 125–153 (PTRSLAYTLAQLPCASMALQIVWEAARHL). 127–131 (RSLAY) contributes to the glutathione binding site.

Belongs to the MAPEG family. In terms of assembly, homotrimer. The cofactor is glutathione.

It is found in the membrane. The protein resides in the cytoplasm. Its subcellular location is the perinuclear region. It catalyses the reaction prostaglandin H2 = prostaglandin E2. The enzyme catalyses 2-glyceryl-prostaglandin H2 = 2-glyceryl-prostaglandin E2. The catalysed reaction is prostaglandin G2 = (15S)-15-hydroperoxy-prostaglandin E2. It carries out the reaction 1-chloro-2,4-dinitrobenzene + glutathione = 2,4-dinitrophenyl-S-glutathione + chloride + H(+). It catalyses the reaction (5S)-hydroperoxy-(6E,8Z,11Z,14Z)-eicosatetraenoate + 2 glutathione = (5S)-hydroxy-(6E,8Z,11Z,14Z)-eicosatetraenoate + glutathione disulfide + H2O. Its pathway is lipid metabolism; prostaglandin biosynthesis. Functionally, terminal enzyme of the cyclooxygenase (COX)-2-mediated prostaglandin E2 (PGE2) biosynthetic pathway. Catalyzes the glutathione-dependent oxidoreduction of prostaglandin endoperoxide H2 (PGH2) to prostaglandin E2 (PGE2) in response to inflammatory stimuli. Plays a key role in inflammation response, fever and pain. Also catalyzes the oxidoreduction of endocannabinoids into prostaglandin glycerol esters and PGG2 into 15-hydroperoxy-PGE2. In addition, displays low glutathione transferase and glutathione-dependent peroxidase activities, toward 1-chloro-2,4-dinitrobenzene and 5-hydroperoxyicosatetraenoic acid (5-HPETE), respectively. The chain is Prostaglandin E synthase (PTGES) from Bos taurus (Bovine).